The following is a 344-amino-acid chain: Dihydroorotase (344 aa).

2 residues coordinate Zn(2+): His-14 and His-16. Substrate contacts are provided by residues 16–18 and Asn-42; that span reads HLR. Zn(2+) contacts are provided by Lys-100, His-137, and His-175. At Lys-100 the chain carries N6-carboxylysine. Residue His-137 coordinates substrate. Leu-220 provides a ligand contact to substrate. Residue Asp-248 participates in Zn(2+) binding. The active site involves Asp-248. His-252 and Ala-264 together coordinate substrate.

Belongs to the metallo-dependent hydrolases superfamily. DHOase family. Class II DHOase subfamily. Homodimer. Zn(2+) serves as cofactor.

The enzyme catalyses (S)-dihydroorotate + H2O = N-carbamoyl-L-aspartate + H(+). The protein operates within pyrimidine metabolism; UMP biosynthesis via de novo pathway; (S)-dihydroorotate from bicarbonate: step 3/3. Its function is as follows. Catalyzes the reversible cyclization of carbamoyl aspartate to dihydroorotate. The sequence is that of Dihydroorotase from Cupriavidus pinatubonensis (strain JMP 134 / LMG 1197) (Cupriavidus necator (strain JMP 134)).